Consider the following 543-residue polypeptide: Chaperonin GroEL (543 aa).

Residues threonine 29–proline 32, aspartate 86–threonine 90, glycine 413, asparagine 476–alanine 478, and aspartate 492 each bind ATP.

It belongs to the chaperonin (HSP60) family. In terms of assembly, forms a cylinder of 14 subunits composed of two heptameric rings stacked back-to-back. Interacts with the co-chaperonin GroES.

The protein localises to the cytoplasm. The enzyme catalyses ATP + H2O + a folded polypeptide = ADP + phosphate + an unfolded polypeptide.. In terms of biological role, together with its co-chaperonin GroES, plays an essential role in assisting protein folding. The GroEL-GroES system forms a nano-cage that allows encapsulation of the non-native substrate proteins and provides a physical environment optimized to promote and accelerate protein folding. This is Chaperonin GroEL from Streptococcus pyogenes serotype M3 (strain SSI-1).